The following is a 416-amino-acid chain: Adenylosuccinate synthetase (416 aa).

GTP contacts are provided by residues G13–K19 and G41–T43. The active-site Proton acceptor is the D14. Residues D14 and G41 each contribute to the Mg(2+) site. IMP-binding positions include D14–K17, N39–H42, T126, R140, Q220, T235, and R299. Residue H42 is the Proton donor of the active site. T295–R301 lines the substrate pocket. Residues R301, K327–D329, and S405–S407 each bind GTP.

Belongs to the adenylosuccinate synthetase family. In terms of assembly, homodimer. Mg(2+) serves as cofactor.

It localises to the cytoplasm. It catalyses the reaction IMP + L-aspartate + GTP = N(6)-(1,2-dicarboxyethyl)-AMP + GDP + phosphate + 2 H(+). The protein operates within purine metabolism; AMP biosynthesis via de novo pathway; AMP from IMP: step 1/2. Plays an important role in the de novo pathway of purine nucleotide biosynthesis. Catalyzes the first committed step in the biosynthesis of AMP from IMP. The sequence is that of Adenylosuccinate synthetase from Campylobacter curvus (strain 525.92).